The sequence spans 177 residues: ATP synthase subunit delta (177 aa).

Belongs to the ATPase delta chain family. F-type ATPases have 2 components, F(1) - the catalytic core - and F(0) - the membrane proton channel. F(1) has five subunits: alpha(3), beta(3), gamma(1), delta(1), epsilon(1). F(0) has three main subunits: a(1), b(2) and c(10-14). The alpha and beta chains form an alternating ring which encloses part of the gamma chain. F(1) is attached to F(0) by a central stalk formed by the gamma and epsilon chains, while a peripheral stalk is formed by the delta and b chains.

The protein localises to the cell inner membrane. F(1)F(0) ATP synthase produces ATP from ADP in the presence of a proton or sodium gradient. F-type ATPases consist of two structural domains, F(1) containing the extramembraneous catalytic core and F(0) containing the membrane proton channel, linked together by a central stalk and a peripheral stalk. During catalysis, ATP synthesis in the catalytic domain of F(1) is coupled via a rotary mechanism of the central stalk subunits to proton translocation. In terms of biological role, this protein is part of the stalk that links CF(0) to CF(1). It either transmits conformational changes from CF(0) to CF(1) or is implicated in proton conduction. The chain is ATP synthase subunit delta from Aeromonas salmonicida (strain A449).